Reading from the N-terminus, the 379-residue chain is UDP-4-amino-4-deoxy-L-arabinose--oxoglutarate aminotransferase (379 aa).

Lys183 bears the N6-(pyridoxal phosphate)lysine mark.

It belongs to the DegT/DnrJ/EryC1 family. ArnB subfamily. Homodimer. Requires pyridoxal 5'-phosphate as cofactor.

The catalysed reaction is UDP-4-amino-4-deoxy-beta-L-arabinose + 2-oxoglutarate = UDP-beta-L-threo-pentopyranos-4-ulose + L-glutamate. The protein operates within nucleotide-sugar biosynthesis; UDP-4-deoxy-4-formamido-beta-L-arabinose biosynthesis; UDP-4-deoxy-4-formamido-beta-L-arabinose from UDP-alpha-D-glucuronate: step 2/3. It participates in bacterial outer membrane biogenesis; lipopolysaccharide biosynthesis. Catalyzes the conversion of UDP-4-keto-arabinose (UDP-Ara4O) to UDP-4-amino-4-deoxy-L-arabinose (UDP-L-Ara4N). The modified arabinose is attached to lipid A and is required for resistance to polymyxin and cationic antimicrobial peptides. This chain is UDP-4-amino-4-deoxy-L-arabinose--oxoglutarate aminotransferase, found in Pseudomonas fluorescens (strain ATCC BAA-477 / NRRL B-23932 / Pf-5).